We begin with the raw amino-acid sequence, 525 residues long: GMP synthase [glutamine-hydrolyzing] (525 aa).

The Glutamine amidotransferase type-1 domain occupies 8–207 (KILILDFGSQ…ALDICGCKAN (200 aa)). Cysteine 85 functions as the Nucleophile in the catalytic mechanism. Active-site residues include histidine 181 and glutamate 183. A GMPS ATP-PPase domain is found at 208 to 400 (WKPSSIIEDA…LGLPYNMLYR (193 aa)). 235 to 241 (SGGVDSS) is a binding site for ATP.

As to quaternary structure, homodimer.

The catalysed reaction is XMP + L-glutamine + ATP + H2O = GMP + L-glutamate + AMP + diphosphate + 2 H(+). The protein operates within purine metabolism; GMP biosynthesis; GMP from XMP (L-Gln route): step 1/1. Functionally, catalyzes the synthesis of GMP from XMP. The protein is GMP synthase [glutamine-hydrolyzing] of Shewanella frigidimarina (strain NCIMB 400).